A 79-amino-acid polypeptide reads, in one-letter code: Small ribosomal subunit protein uS17 (79 aa).

The protein belongs to the universal ribosomal protein uS17 family. As to quaternary structure, part of the 30S ribosomal subunit.

Its function is as follows. One of the primary rRNA binding proteins, it binds specifically to the 5'-end of 16S ribosomal RNA. This Caulobacter sp. (strain K31) protein is Small ribosomal subunit protein uS17.